We begin with the raw amino-acid sequence, 80 residues long: MARKKAALDFEQSLADLQTLVERLENGELSLEDSLTAFEQGIGLTRDCQAALAQAEQKVQILLERDGELAEQPFDAEQPE.

Belongs to the XseB family. Heterooligomer composed of large and small subunits.

Its subcellular location is the cytoplasm. It carries out the reaction Exonucleolytic cleavage in either 5'- to 3'- or 3'- to 5'-direction to yield nucleoside 5'-phosphates.. In terms of biological role, bidirectionally degrades single-stranded DNA into large acid-insoluble oligonucleotides, which are then degraded further into small acid-soluble oligonucleotides. This is Exodeoxyribonuclease 7 small subunit from Pseudomonas fluorescens (strain ATCC BAA-477 / NRRL B-23932 / Pf-5).